Reading from the N-terminus, the 435-residue chain is MNIVILGTQWGDEGKGKIVDMLTEDVAAVVRFQGGHNAGHTLIIDGEKTILRLIPSGILREGVLCLIGNGVVLSPPALMEEIEELNAKGIPVTERLRISSACNLLLPYHVALDKAREAELGTKAIGTTGRGIGPAYEDKVARRGIRAMDLLHPNQLLEKIKKATAYHNIQLEHYYHQTPLDYQSIYNQLMEFREKIKPMIGDVSALLGNLRRQNKHIIFEGAQGSLLDIDLGTYPYVTSSNTTAGSAATGSGFGPLYFDRVLGITKAYVTRVGAGPFPTELTNEEGKKMAKRGNEFGSVTGRPRRCGWFDVISMRRTIQINSLTGIVLTKLDVLDEFAKIHLCTAYRCDGEVVNEPPFDQSLLESCEPVYEEMPGWQTSTYGLTDYSEMPKEARNYISRLEELLGVPITIISTGPDRKHTIVRQAVFNQVITAKG.

GTP is bound by residues 11-17 (GDEGKGK) and 39-41 (GHT). The active-site Proton acceptor is the Asp-12. Positions 12 and 39 each coordinate Mg(2+). Residues 12 to 15 (DEGK), 37 to 40 (NAGH), Thr-128, Arg-142, Gln-223, Thr-238, and Arg-302 each bind IMP. The active-site Proton donor is His-40. Residue 298–304 (SVTGRPR) participates in substrate binding. GTP is bound by residues Arg-304, 330-332 (KLD), and 412-414 (STG).

The protein belongs to the adenylosuccinate synthetase family. Homodimer. The cofactor is Mg(2+).

The protein resides in the cytoplasm. It carries out the reaction IMP + L-aspartate + GTP = N(6)-(1,2-dicarboxyethyl)-AMP + GDP + phosphate + 2 H(+). Its pathway is purine metabolism; AMP biosynthesis via de novo pathway; AMP from IMP: step 1/2. Plays an important role in the de novo pathway of purine nucleotide biosynthesis. Catalyzes the first committed step in the biosynthesis of AMP from IMP. This Coxiella burnetii (strain Dugway 5J108-111) protein is Adenylosuccinate synthetase.